The primary structure comprises 161 residues: ATP synthase subunit b 1 (161 aa).

A helical transmembrane segment spans residues 1–21; the sequence is MFATAEFWILACLVAFFAILG.

The protein belongs to the ATPase B chain family. F-type ATPases have 2 components, F(1) - the catalytic core - and F(0) - the membrane proton channel. F(1) has five subunits: alpha(3), beta(3), gamma(1), delta(1), epsilon(1). F(0) has three main subunits: a(1), b(2) and c(10-14). The alpha and beta chains form an alternating ring which encloses part of the gamma chain. F(1) is attached to F(0) by a central stalk formed by the gamma and epsilon chains, while a peripheral stalk is formed by the delta and b chains.

The protein localises to the cell inner membrane. In terms of biological role, f(1)F(0) ATP synthase produces ATP from ADP in the presence of a proton or sodium gradient. F-type ATPases consist of two structural domains, F(1) containing the extramembraneous catalytic core and F(0) containing the membrane proton channel, linked together by a central stalk and a peripheral stalk. During catalysis, ATP synthesis in the catalytic domain of F(1) is coupled via a rotary mechanism of the central stalk subunits to proton translocation. Component of the F(0) channel, it forms part of the peripheral stalk, linking F(1) to F(0). This is ATP synthase subunit b 1 from Parvibaculum lavamentivorans (strain DS-1 / DSM 13023 / NCIMB 13966).